The primary structure comprises 601 residues: Glutathione-regulated potassium-efflux system protein KefB (601 aa).

A run of 13 helical transmembrane segments spans residues 5-25 (DLLL…PIAA), 29-49 (IGAV…GLGF), 55-75 (EILH…GLEL), 87-107 (IFGI…GLLM), 115-135 (AAVV…LQLM), 152-172 (VLLF…LLAG), 181-201 (LKIG…RYLL), 207-227 (FIAG…LVLG), 230-250 (LFMD…GILL), 268-288 (GLLL…GVLY), 291-311 (ILWV…VLYG), 324-344 (LPFA…FSSA), and 356-376 (ALLL…MKGI). Residues 400-519 (KPQVIIVGFG…AGVKQFSRET (120 aa)) enclose the RCK N-terminal domain.

This sequence belongs to the monovalent cation:proton antiporter 2 (CPA2) transporter (TC 2.A.37) family. KefB subfamily. Interacts with the regulatory subunit KefG.

It is found in the cell inner membrane. In terms of biological role, pore-forming subunit of a potassium efflux system that confers protection against electrophiles. Catalyzes K(+)/H(+) antiport. The sequence is that of Glutathione-regulated potassium-efflux system protein KefB from Cronobacter sakazakii (strain ATCC BAA-894) (Enterobacter sakazakii).